A 424-amino-acid polypeptide reads, in one-letter code: Deoxyguanosinetriphosphate triphosphohydrolase-like protein (424 aa).

The interval 1 to 24 (MYPYSDADAFRRHPERAKSSQLRT) is disordered. Residues 8–18 (DAFRRHPERAK) show a composition bias toward basic and acidic residues. Residues 67–217 (RLTHSLEVAQ…MDFSDDIAYS (151 aa)) form the HD domain.

This sequence belongs to the dGTPase family. Type 2 subfamily.

The polypeptide is Deoxyguanosinetriphosphate triphosphohydrolase-like protein (Corynebacterium glutamicum (strain R)).